The sequence spans 264 residues: MICOS complex subunit MIC27 (264 aa).

Residues Met1–Lys27 constitute a mitochondrion transit peptide. The Mitochondrial intermembrane segment spans residues Glu28–Asp110. A helical membrane pass occupies residues Phe111–Ala129. At Arg130–Arg137 the chain is on the mitochondrial matrix side. The helical transmembrane segment at Ile138 to Val155 threads the bilayer. At Gln156 to Ser264 the chain is on the mitochondrial intermembrane side. Residues Lys189 to Lys198 are compositionally biased toward basic and acidic residues. The disordered stretch occupies residues Lys189–Ser264. Residues Ala223–Thr238 show a composition bias toward low complexity. Residues Lys245 to Asp256 are compositionally biased toward basic and acidic residues.

The protein belongs to the apolipoprotein O/MICOS complex subunit Mic27 family. In terms of assembly, component of the mitochondrial contact site and cristae organizing system (MICOS) complex, composed of at least MICOS10/MIC10, CHCHD3/MIC19, CHCHD6/MIC25, APOOL/MIC27, IMMT/MIC60, APOO/MIC23/MIC26 and QIL1/MIC13. This complex was also known under the names MINOS or MitOS complex. The MICOS complex associates with mitochondrial outer membrane proteins SAMM50, MTX1 and MTX2 (together described as components of the mitochondrial outer membrane sorting assembly machinery (SAM) complex) and DNAJC11, mitochondrial inner membrane protein TMEM11 and with HSPA9. The MICOS and SAM complexes together with DNAJC11 are part of a large protein complex spanning both membranes termed the mitochondrial intermembrane space bridging (MIB) complex. Interacts with MICOS10/MIC10, IMMT/MIC60 and APOO/MIC23/MIC26.

It is found in the mitochondrion inner membrane. The protein resides in the mitochondrion. Its function is as follows. Component of the MICOS complex, a large protein complex of the mitochondrial inner membrane that plays crucial roles in the maintenance of crista junctions, inner membrane architecture, and formation of contact sites to the outer membrane. Specifically binds to cardiolipin (in vitro) but not to the precursor lipid phosphatidylglycerol. Plays a crucial role in crista junction formation and mitochondrial function. The chain is MICOS complex subunit MIC27 (APOL) from Bos taurus (Bovine).